A 204-amino-acid polypeptide reads, in one-letter code: Small ribosomal subunit protein uS4 (204 aa).

One can recognise an S4 RNA-binding domain in the interval 92–153; sequence RRLDALVLRS…RSKEKTLFTI (62 aa).

The protein belongs to the universal ribosomal protein uS4 family. Part of the 30S ribosomal subunit. Contacts protein S5. The interaction surface between S4 and S5 is involved in control of translational fidelity.

Functionally, one of the primary rRNA binding proteins, it binds directly to 16S rRNA where it nucleates assembly of the body of the 30S subunit. In terms of biological role, with S5 and S12 plays an important role in translational accuracy. This Streptomyces coelicolor (strain ATCC BAA-471 / A3(2) / M145) protein is Small ribosomal subunit protein uS4.